The following is a 577-amino-acid chain: Urease subunit alpha (577 aa).

Residues 136 to 577 (GGIDCHVHFI…LPMAQRYFLF (442 aa)) enclose the Urease domain. Ni(2+)-binding residues include H141, H143, and K224. At K224 the chain carries N6-carboxylysine. H226 is a substrate binding site. Positions 253 and 279 each coordinate Ni(2+). Residue H327 is the Proton donor of the active site. Position 367 (D367) interacts with Ni(2+).

This sequence belongs to the metallo-dependent hydrolases superfamily. Urease alpha subunit family. As to quaternary structure, heterotrimer of UreA (gamma), UreB (beta) and UreC (alpha) subunits. Three heterotrimers associate to form the active enzyme. Ni cation is required as a cofactor. In terms of processing, carboxylation allows a single lysine to coordinate two nickel ions.

The protein resides in the cytoplasm. It carries out the reaction urea + 2 H2O + H(+) = hydrogencarbonate + 2 NH4(+). The protein operates within nitrogen metabolism; urea degradation; CO(2) and NH(3) from urea (urease route): step 1/1. This is Urease subunit alpha from Mycobacteroides abscessus (strain ATCC 19977 / DSM 44196 / CCUG 20993 / CIP 104536 / JCM 13569 / NCTC 13031 / TMC 1543 / L948) (Mycobacterium abscessus).